Reading from the N-terminus, the 356-residue chain is S-adenosylmethionine:tRNA ribosyltransferase-isomerase (356 aa).

Belongs to the QueA family. In terms of assembly, monomer.

Its subcellular location is the cytoplasm. The catalysed reaction is 7-aminomethyl-7-carbaguanosine(34) in tRNA + S-adenosyl-L-methionine = epoxyqueuosine(34) in tRNA + adenine + L-methionine + 2 H(+). Its pathway is tRNA modification; tRNA-queuosine biosynthesis. Transfers and isomerizes the ribose moiety from AdoMet to the 7-aminomethyl group of 7-deazaguanine (preQ1-tRNA) to give epoxyqueuosine (oQ-tRNA). This is S-adenosylmethionine:tRNA ribosyltransferase-isomerase from Yersinia pestis.